Here is a 193-residue protein sequence, read N- to C-terminus: Protein D5 (193 aa).

Functionally, repression of replication initiation (possible). The sequence is that of Protein D5 (ddpE) from Dictyostelium discoideum (Social amoeba).